A 403-amino-acid chain; its full sequence is CCA-adding enzyme (403 aa).

ATP is bound by residues Gly-32 and Arg-35. CTP contacts are provided by Gly-32 and Arg-35. Residues Asp-45 and Asp-47 each contribute to the Mg(2+) site. Positions 116, 159, 162, 165, and 168 each coordinate ATP. CTP-binding residues include Arg-116, Asp-159, Arg-162, Arg-165, and Arg-168.

It belongs to the tRNA nucleotidyltransferase/poly(A) polymerase family. Bacterial CCA-adding enzyme type 3 subfamily. Homodimer. It depends on Mg(2+) as a cofactor.

It carries out the reaction a tRNA precursor + 2 CTP + ATP = a tRNA with a 3' CCA end + 3 diphosphate. The enzyme catalyses a tRNA with a 3' CCA end + 2 CTP + ATP = a tRNA with a 3' CCACCA end + 3 diphosphate. Catalyzes the addition and repair of the essential 3'-terminal CCA sequence in tRNAs without using a nucleic acid template. Adds these three nucleotides in the order of C, C, and A to the tRNA nucleotide-73, using CTP and ATP as substrates and producing inorganic pyrophosphate. tRNA 3'-terminal CCA addition is required both for tRNA processing and repair. Also involved in tRNA surveillance by mediating tandem CCA addition to generate a CCACCA at the 3' terminus of unstable tRNAs. While stable tRNAs receive only 3'-terminal CCA, unstable tRNAs are marked with CCACCA and rapidly degraded. The polypeptide is CCA-adding enzyme (Leuconostoc citreum (strain KM20)).